A 398-amino-acid chain; its full sequence is MNKKKLGIRLLSLLALGGFVLANPVFADQNFARNEKEAKDSAITFIQKSAAIKAGARSAEDIKLDKVNLGGELSGSNMYVYNISTGGFVIVSGDKRSPEILGYSTSGSFDANGKENIASFMESYVEQIKENKKLDTTYAGTAEIKQPVVKSLLDSKGIHYNQGNPYNLLTPVIEKVKPGEQSFVGQHAATGCVATATAQIMKYHNYPNKGLKDYTYTLSSNNPYFNHPKNLFAAISTRQYNWNNILPTYSGRESNVQKMAISELMADVGISVDMDYGPSSGSAGSSRVQRALKENFGYNQSVHQINRSDFSKQDWEAQIDKELSQNQPVYYQGVGKVGGHAFVIDGADGRNFYHVNWGWGGVSDGFFRLDALNPSALGTGGGAGGFNGYQSAVVGIKP.

An N-terminal signal peptide occupies residues 1-27 (MNKKKLGIRLLSLLALGGFVLANPVFA). Positions 28–145 (DQNFARNEKE…TTYAGTAEIK (118 aa)) are excised as a propeptide. Cys192 functions as the Nucleophile in the catalytic mechanism. The residue at position 192 (Cys192) is a Cysteine methyl disulfide; in zymogen form. Residues Ser282 and Gly339 each contribute to the a protein site. Residue His340 is the Proton acceptor of the active site. The C-terminal active site loop stretch occupies residues 368 to 390 (RLDALNPSALGTGGGAGGFNGYQ).

Belongs to the peptidase C10 family. In terms of assembly, monomer. In terms of processing, the mature protease is derived from the precursor sequence by cleavage, either in cis via an autocatalytic mechanism, or in trans by mature SpeB or host proteases (trypsin, plasmin or subtilisin). Maturation can involve a number of protein cleavage intermediates. Mature SpeB probably plays the most important role in protein maturation in physiological conditions. Post-translationally, methylthiolation at Cys-192 of the inactive zymogen form is probably involved in the mechanism of secretion of the proteinase into the culture fluid.

It localises to the secreted. The protein localises to the host extracellular space. It is found in the host cytoplasm. The catalysed reaction is Preferential cleavage with hydrophobic residues at P2, P1 and P1'.. With respect to regulation, synthesized as an inactive zymogen to protect the intracellular components of the bacteria from proteolytic activity during protein production. Once secreted into the extracellular milieu, cleaved into the active protease: maturation can be mediated in cis by autocatalytic cleavage, or in trans by mature SpeB or host proteases. Protease activity is strongly inhibited by zinc and copper, which prevent its maturation into an active protease: inhibition by metal ions may be required to prevent proteolysis of streptococcal proteins. Functionally, cysteine protease that acts as a key streptococcal virulence factor by cleaving host proteins involved in immune response. Triggers inflammation by mediating cleavage of host proteins, which can both promote host pathogenesis by triggering sterile inflammation and/or restrict streptococcal infection, depending on host immune statue and infection site. Cleaves host gasdermin-A (GSDMA) in epithelial cells, promoting GSDMA activation and formation of gasdermin pores, triggering pyroptosis. Pyroptosis triggers the elimination of the infected skin cell, depriving the pathogen of its protective niche, while inducing an inflammatory response. This ultimately prevents bacterial penetration of the epithelial barrier and a subsequent systemic dissemination of the pathogen. Also mediates cleavage of the cytokine precursor interleukin-1 beta (IL1B) to its mature form, resulting in inflammation and septic shock. SpeB-mediated maturation of IL1B plays a dual role depending on infection site: while IL1B inflammatory response prevents bacterial growth during invasive skin infections, it promotes streptococcal infection of the nasopharynx by disrupting colonization resistance mediated by the microbiota. Inhibits host autophagy be catalyzing cleavage and inactivation of key autophagy factors, such as CALCOCO2, NBR1 and SQSTM1. Cleaves and inhibits a number of complement factors, such as C2, C3-beta chain of C3, C4, C5 or SERPING1, thereby promoting evasion of host immunity. May also impair adaptive immunity by catalyzing cleavage and degradation of host immunoglobulins to promote immune system evasion; the relevance of this activity is however unsure in vivo. Catalyzes maturation and release of the peptide hormone bradykinin from the precursor Kininogen-1 (KNG1) to produce hypotension during septic shock. Also involved in bacterial translocation across the host epithelial barrier by mediating cleavage and degradation of host epithelial junction proteins, such as CDH1 and OCLN. Additionally, has been involved in degradation of fibronectin and vitronectin, two host extracellular matrix proteins involved in tissue integrity. Also able to catalyze cleavage and degradation of streptococcal proteins, such as C5a peptidase, EndoS or SmeZ. Degradation of streptococcal proteins is however strictly regulated to preserve integrity of other virulence factors. The chain is Streptopain (speB) from Streptococcus pyogenes serotype M3 (strain ATCC BAA-595 / MGAS315).